Consider the following 701-residue polypeptide: Methionine--tRNA ligase (701 aa).

The 'HIGH' region motif lies at 13–23 (PYANGSIHLGH). Zn(2+)-binding residues include cysteine 144, cysteine 147, cysteine 157, and cysteine 160. The 'KMSKS' region signature appears at 336-340 (KMSKS). Lysine 339 provides a ligand contact to ATP. The region spanning 600-701 (DFSKIDLRIA…SGAQPGMRVK (102 aa)) is the tRNA-binding domain.

It belongs to the class-I aminoacyl-tRNA synthetase family. MetG type 1 subfamily. Homodimer. Zn(2+) serves as cofactor.

Its subcellular location is the cytoplasm. It carries out the reaction tRNA(Met) + L-methionine + ATP = L-methionyl-tRNA(Met) + AMP + diphosphate. In terms of biological role, is required not only for elongation of protein synthesis but also for the initiation of all mRNA translation through initiator tRNA(fMet) aminoacylation. This chain is Methionine--tRNA ligase, found in Nitrosomonas eutropha (strain DSM 101675 / C91 / Nm57).